Reading from the N-terminus, the 103-residue chain is Large ribosomal subunit protein bL21 (103 aa).

The protein belongs to the bacterial ribosomal protein bL21 family. Part of the 50S ribosomal subunit. Contacts protein L20.

In terms of biological role, this protein binds to 23S rRNA in the presence of protein L20. The chain is Large ribosomal subunit protein bL21 from Salmonella paratyphi A (strain ATCC 9150 / SARB42).